The primary structure comprises 184 residues: Guanylate kinase (184 aa).

Residues 5–183 enclose the Guanylate kinase-like domain; it reads KKLIILTGPS…TAKRIIKLIQ (179 aa). 12 to 19 is an ATP binding site; the sequence is GPSGVGKG.

It belongs to the guanylate kinase family.

The protein localises to the cytoplasm. It catalyses the reaction GMP + ATP = GDP + ADP. In terms of biological role, essential for recycling GMP and indirectly, cGMP. This Prochlorococcus marinus (strain MIT 9312) protein is Guanylate kinase.